The following is a 323-amino-acid chain: Galactosylgalactosylxylosylprotein 3-beta-glucuronosyltransferase 2 (323 aa).

Residues 1–2 (MK) lie on the Cytoplasmic side of the membrane. The chain crosses the membrane as a helical; Signal-anchor for type II membrane protein span at residues 3–23 (SALFTRFFILLPWILIVIIML). Residues 24–323 (DVDTRRPVPP…YHLDTVKIEV (300 aa)) lie on the Lumenal side of the membrane. The tract at residues 51-80 (RLPLRRGGPAHGTQKRNQSRPQPQPEPQLP) is disordered. An N-linked (GlcNAc...) asparagine glycan is attached at Asn67. Residues 87–89 (PTY), Asp118, Arg155, Arg160, and 185–187 (DDD) each bind UDP-alpha-D-glucuronate. Position 187 (Asp187) interacts with Mn(2+). The tract at residues 234–243 (WRADRPFAID) is interaction with galactose moiety of substrate glycoprotein. Glu273 (proton donor/acceptor) is an active-site residue. Asn292 carries an N-linked (GlcNAc...) asparagine glycan. 300 to 302 (HTR) lines the UDP-alpha-D-glucuronate pocket.

Belongs to the glycosyltransferase 43 family. Homodimer. It depends on Mn(2+) as a cofactor. In terms of tissue distribution, expressed in the trachea, retina, spinal cord, hippocampus and other brain regions, and, at lower levels, in testis and ovary.

The protein resides in the golgi apparatus membrane. The catalysed reaction is 3-O-(beta-D-galactosyl-(1-&gt;3)-beta-D-galactosyl-(1-&gt;4)-beta-D-xylosyl)-L-seryl-[protein] + UDP-alpha-D-glucuronate = 3-O-(beta-D-GlcA-(1-&gt;3)-beta-D-Gal-(1-&gt;3)-beta-D-Gal-(1-&gt;4)-beta-D-Xyl)-L-seryl-[protein] + UDP + H(+). The protein operates within protein modification; protein glycosylation. In terms of biological role, involved in the biosynthesis of L2/HNK-1 carbohydrate epitope on both glycolipids and glycoproteins. This chain is Galactosylgalactosylxylosylprotein 3-beta-glucuronosyltransferase 2 (B3GAT2), found in Homo sapiens (Human).